Reading from the N-terminus, the 294-residue chain is 4-hydroxy-tetrahydrodipicolinate synthase (294 aa).

Threonine 47 is a binding site for pyruvate. Tyrosine 136 functions as the Proton donor/acceptor in the catalytic mechanism. Lysine 164 (schiff-base intermediate with substrate) is an active-site residue. Valine 206 contributes to the pyruvate binding site.

The protein belongs to the DapA family. As to quaternary structure, homotetramer; dimer of dimers.

It is found in the cytoplasm. The catalysed reaction is L-aspartate 4-semialdehyde + pyruvate = (2S,4S)-4-hydroxy-2,3,4,5-tetrahydrodipicolinate + H2O + H(+). It functions in the pathway amino-acid biosynthesis; L-lysine biosynthesis via DAP pathway; (S)-tetrahydrodipicolinate from L-aspartate: step 3/4. Functionally, catalyzes the condensation of (S)-aspartate-beta-semialdehyde [(S)-ASA] and pyruvate to 4-hydroxy-tetrahydrodipicolinate (HTPA). The protein is 4-hydroxy-tetrahydrodipicolinate synthase of Cyanothece sp. (strain PCC 7425 / ATCC 29141).